A 488-amino-acid chain; its full sequence is Glutamyl-tRNA(Gln) amidotransferase subunit A (488 aa).

Active-site charge relay system residues include Lys-77 and Ser-152. Ser-176 functions as the Acyl-ester intermediate in the catalytic mechanism.

It belongs to the amidase family. GatA subfamily. In terms of assembly, heterotrimer of A, B and C subunits.

The catalysed reaction is L-glutamyl-tRNA(Gln) + L-glutamine + ATP + H2O = L-glutaminyl-tRNA(Gln) + L-glutamate + ADP + phosphate + H(+). Functionally, allows the formation of correctly charged Gln-tRNA(Gln) through the transamidation of misacylated Glu-tRNA(Gln) in organisms which lack glutaminyl-tRNA synthetase. The reaction takes place in the presence of glutamine and ATP through an activated gamma-phospho-Glu-tRNA(Gln). This Streptococcus pyogenes serotype M49 (strain NZ131) protein is Glutamyl-tRNA(Gln) amidotransferase subunit A.